The sequence spans 457 residues: Putative F-box protein At3g58860 (457 aa).

The 49-residue stretch at 6–54 (MDLFSKLPDEVISHILSSLPTKEAASTSVLAKKWRYLFAFVPSLDFNDS) folds into the F-box domain.

This chain is Putative F-box protein At3g58860, found in Arabidopsis thaliana (Mouse-ear cress).